We begin with the raw amino-acid sequence, 152 residues long: MTSTVKTPLPAVDDLAPQWYVIDAADQRLGRLAAEIARILRGKNKAIYTPHMDTGDFVIVINAEKVTVTGKKRSQKLYRRHSGRPGGMKIETFDQLQARIPERIIEHAVKGMLPKNSLGRKLFTKLKVYAGPEHPHQAQKPQPLTINTIPGA.

The disordered stretch occupies residues 133 to 152 (EHPHQAQKPQPLTINTIPGA). The segment covering 139–152 (QKPQPLTINTIPGA) has biased composition (polar residues).

Belongs to the universal ribosomal protein uL13 family. As to quaternary structure, part of the 50S ribosomal subunit.

In terms of biological role, this protein is one of the early assembly proteins of the 50S ribosomal subunit, although it is not seen to bind rRNA by itself. It is important during the early stages of 50S assembly. The chain is Large ribosomal subunit protein uL13 from Thermosynechococcus vestitus (strain NIES-2133 / IAM M-273 / BP-1).